The following is a 162-amino-acid chain: Ribosomal RNA large subunit methyltransferase H (162 aa).

S-adenosyl-L-methionine is bound by residues L78, G109, and L128–L133.

The protein belongs to the RNA methyltransferase RlmH family. In terms of assembly, homodimer.

The protein localises to the cytoplasm. It carries out the reaction pseudouridine(1915) in 23S rRNA + S-adenosyl-L-methionine = N(3)-methylpseudouridine(1915) in 23S rRNA + S-adenosyl-L-homocysteine + H(+). Functionally, specifically methylates the pseudouridine at position 1915 (m3Psi1915) in 23S rRNA. The protein is Ribosomal RNA large subunit methyltransferase H of Psychrobacter cryohalolentis (strain ATCC BAA-1226 / DSM 17306 / VKM B-2378 / K5).